Here is a 705-residue protein sequence, read N- to C-terminus: Glycine--tRNA ligase beta subunit (705 aa).

It belongs to the class-II aminoacyl-tRNA synthetase family. Tetramer of two alpha and two beta subunits.

It localises to the cytoplasm. It catalyses the reaction tRNA(Gly) + glycine + ATP = glycyl-tRNA(Gly) + AMP + diphosphate. The chain is Glycine--tRNA ligase beta subunit from Persephonella marina (strain DSM 14350 / EX-H1).